Here is a 114-residue protein sequence, read N- to C-terminus: MTANVSGIGSVLQQMQSMAAQASGGVASPTAALAGSGAATASTFASAMKASLDKISGDQQHALGEAQAFEVGAPNVSLNDVMVDMQKANIGFQFGLQVRNKLVSAYNDIMQMSV.

The protein belongs to the FliE family.

It localises to the bacterial flagellum basal body. This is Flagellar hook-basal body complex protein FliE from Burkholderia lata (strain ATCC 17760 / DSM 23089 / LMG 22485 / NCIMB 9086 / R18194 / 383).